Reading from the N-terminus, the 68-residue chain is Protein P33 (68 aa).

Positions 34-63 (IVNLQGRIAELEARETEMLARVDTLIARLA) form a coiled coil.

Its function is as follows. Assembly protein. In Acinetobacter calcoaceticus (Arthrobacter siderocapsulatus), this protein is Protein P33 (XXXIII).